The chain runs to 179 residues: Inosine/xanthosine triphosphatase (179 aa).

8–13 serves as a coordination point for substrate; that stretch reads TTNPAK. D38 and E68 together coordinate Mg(2+). 68–69 is a substrate binding site; the sequence is EA.

The protein belongs to the YjjX NTPase family. Homodimer. Mg(2+) is required as a cofactor. Mn(2+) serves as cofactor.

The enzyme catalyses XTP + H2O = XDP + phosphate + H(+). It carries out the reaction ITP + H2O = IDP + phosphate + H(+). Phosphatase that hydrolyzes non-canonical purine nucleotides such as XTP and ITP to their respective diphosphate derivatives. Probably excludes non-canonical purines from DNA/RNA precursor pool, thus preventing their incorporation into DNA/RNA and avoiding chromosomal lesions. The polypeptide is Inosine/xanthosine triphosphatase (Proteus mirabilis (strain HI4320)).